Reading from the N-terminus, the 274-residue chain is Large ribosomal subunit protein uL2cz/uL2cy (274 aa).

Disordered stretches follow at residues 1–21 and 225–274; these read MAIHLYKTSTPSTRNGAVDSQ and PVDH…RRSK.

This sequence belongs to the universal ribosomal protein uL2 family. Part of the 50S ribosomal subunit.

Its subcellular location is the plastid. The protein resides in the chloroplast. The sequence is that of Large ribosomal subunit protein uL2cz/uL2cy (rpl2-A) from Arabidopsis thaliana (Mouse-ear cress).